The following is a 249-amino-acid chain: Neurotrophic factor BDNF precursor form (249 aa).

The first 18 residues, 1-18 (MTILFLTMVISYFGCMKA), serve as a signal peptide directing secretion. The propeptide occupies 19 to 130 (APMKEANVHG…AANMSMRVRR (112 aa)). Asn123 carries N-linked (GlcNAc...) asparagine glycosylation. Intrachain disulfides connect Cys143-Cys210, Cys188-Cys239, and Cys198-Cys241.

Belongs to the NGF-beta family. As to quaternary structure, monomers and homodimers. Binds to NTRK2/TRKB. Can form heterodimers with other neurotrophin family members, such as NTF3 and NTF4 (in vitro), but the physiological relevance of this is not clear. BDNF precursor form: interacts with the heterodimer formed by NGFR and SORCS2. Mature BDNF has much lower affinity for the heterodimer formed by NGFR and SORCS2. N-glycosylated and glycosulfated, contrary to mature BDNF. Post-translationally, mature BDNF is produced by proteolytic removal of the propeptide, catalyzed by a FURIN family member. In addition, the precursor form is proteolytically cleaved within the propeptide, but this is not an obligatory intermediate for the production of mature BDNF. Can be converted into mature BDNF by plasmin (PLG).

It is found in the secreted. In terms of biological role, important signaling molecule that activates signaling cascades downstream of NTRK2. During development, promotes the survival and differentiation of selected neuronal populations of the peripheral and central nervous systems. Participates in axonal growth, pathfinding and in the modulation of dendritic growth and morphology. Major regulator of synaptic transmission and plasticity at adult synapses in many regions of the CNS. The versatility of BDNF is emphasized by its contribution to a range of adaptive neuronal responses including long-term potentiation (LTP), long-term depression (LTD), certain forms of short-term synaptic plasticity, as well as homeostatic regulation of intrinsic neuronal excitability. Functionally, important signaling molecule that activates signaling cascades downstream of NTRK2. Activates signaling cascades via the heterodimeric receptor formed by NGFR and SORCS2. Signaling via NGFR and SORCS2 plays a role in synaptic plasticity and long-term depression (LTD). Binding to NGFR and SORCS2 promotes neuronal apoptosis. Promotes neuronal growth cone collapse. The polypeptide is Neurotrophic factor BDNF precursor form (Bdnf) (Rattus norvegicus (Rat)).